We begin with the raw amino-acid sequence, 223 residues long: Ethylene-inducing xylanase 1 (223 aa).

The signal sequence occupies residues 1–19 (MVSFTSLLAAFSVVSGVLT). The GH11 domain occupies 34-223 (KRTPSSTGTS…SSGSATMTVS (190 aa)). Residue E119 is the Nucleophile of the active site. A nuclear localization signal region spans residues 174 to 184 (RRTKRTSGSVN). Catalysis depends on E210, which acts as the Proton donor.

This sequence belongs to the glycosyl hydrolase 11 (cellulase G) family.

The protein localises to the secreted. The protein resides in the host nucleus. The enzyme catalyses Endohydrolysis of (1-&gt;4)-beta-D-xylosidic linkages in xylans.. The protein operates within glycan degradation; xylan degradation. Endo-1,4-beta-xylanase involved in the hydrolysis of xylan, a major structural heterogeneous polysaccharide found in plant biomass representing the second most abundant polysaccharide in the biosphere, after cellulose. Acts as an effector that localizes to the host nucleus to contribute to the virulence process. Induces host innate immunity responses; triggers BAK1-and SOBIR1-dependent cell death, salicylic acid signaling and jasmonic acid signaling. Does not exhibit any cell death when transiently expressed in N.benthamiana. This Verticillium dahliae (strain VdLs.17 / ATCC MYA-4575 / FGSC 10137) (Verticillium wilt) protein is Ethylene-inducing xylanase 1.